Here is a 656-residue protein sequence, read N- to C-terminus: tRNA 5-methylaminomethyl-2-thiouridine biosynthesis bifunctional protein MnmC (656 aa).

The tRNA (mnm(5)s(2)U34)-methyltransferase stretch occupies residues 1–236; sequence MTDPLIPAVL…KRAMLVGHFA (236 aa). The tract at residues 260-656 is FAD-dependent cmnm(5)s(2)U34 oxidoreductase; the sequence is IGAGLAGCAV…LRALRQGAVS (397 aa).

This sequence in the N-terminal section; belongs to the methyltransferase superfamily. tRNA (mnm(5)s(2)U34)-methyltransferase family. The protein in the C-terminal section; belongs to the DAO family. FAD is required as a cofactor.

It is found in the cytoplasm. It catalyses the reaction 5-aminomethyl-2-thiouridine(34) in tRNA + S-adenosyl-L-methionine = 5-methylaminomethyl-2-thiouridine(34) in tRNA + S-adenosyl-L-homocysteine + H(+). In terms of biological role, catalyzes the last two steps in the biosynthesis of 5-methylaminomethyl-2-thiouridine (mnm(5)s(2)U) at the wobble position (U34) in tRNA. Catalyzes the FAD-dependent demodification of cmnm(5)s(2)U34 to nm(5)s(2)U34, followed by the transfer of a methyl group from S-adenosyl-L-methionine to nm(5)s(2)U34, to form mnm(5)s(2)U34. This Paraburkholderia phytofirmans (strain DSM 17436 / LMG 22146 / PsJN) (Burkholderia phytofirmans) protein is tRNA 5-methylaminomethyl-2-thiouridine biosynthesis bifunctional protein MnmC.